A 398-amino-acid chain; its full sequence is Enoyl-[acyl-carrier-protein] reductase [NADH] (398 aa).

NAD(+)-binding positions include 48–53 (GASTGY), 74–75 (FE), 111–112 (DA), and 139–140 (LA). A substrate-binding site is contributed by tyrosine 225. Tyrosine 235 serves as the catalytic Proton donor. NAD(+)-binding positions include lysine 244 and 273 to 275 (VVT).

It belongs to the TER reductase family. In terms of assembly, monomer.

It carries out the reaction a 2,3-saturated acyl-[ACP] + NAD(+) = a (2E)-enoyl-[ACP] + NADH + H(+). It participates in lipid metabolism; fatty acid biosynthesis. Involved in the final reduction of the elongation cycle of fatty acid synthesis (FAS II). Catalyzes the reduction of a carbon-carbon double bond in an enoyl moiety that is covalently linked to an acyl carrier protein (ACP). The protein is Enoyl-[acyl-carrier-protein] reductase [NADH] of Pseudomonas fluorescens (strain ATCC BAA-477 / NRRL B-23932 / Pf-5).